The sequence spans 607 residues: Probable Ufm1-specific protease 2 (607 aa).

Active-site residues include cysteine 440, aspartate 564, and histidine 566.

It belongs to the peptidase C78 family.

In terms of biological role, thiol protease which recognizes and hydrolyzes the peptide bond at the C-terminal Gly of UFM1, a ubiquitin-like modifier protein bound to a number of target proteins. Does not hydrolyze SUMO1 or ISG15 ubiquitin-like proteins. The protein is Probable Ufm1-specific protease 2 of Drosophila melanogaster (Fruit fly).